An 80-amino-acid polypeptide reads, in one-letter code: Protein Vpu (80 aa).

The Extracellular portion of the chain corresponds to 1–6; sequence MYILGL. A helical transmembrane segment spans residues 7-27; that stretch reads GIGALVVTFIIAVIVWTIVYI. Over 28–80 the chain is Cytoplasmic; that stretch reads EYKKLVRQKKIDRLIERIGERAEDSGNESDGDTEELSKLMEMGHLNLGYVADL. Residues Ser-52 and Ser-56 each carry the phosphoserine; by host CK2 modification.

The protein belongs to the HIV-1 VPU protein family. In terms of assembly, homopentamer. Interacts with host CD4 and BRTC; these interactions induce proteasomal degradation of CD4. Interacts with host BST2; this interaction leads to the degradation of host BST2. Interacts with host FBXW11. Interacts with host AP1M1; this interaction plays a role in the mistrafficking and subsequent degradation of host BST2. Interacts with host RANBP2; this interaction allows Vpu to down-regulate host BLM sumoylation. Post-translationally, phosphorylated by host CK2. This phosphorylation is necessary for interaction with human BTRC and degradation of CD4.

It localises to the host membrane. With respect to regulation, ion channel activity is inhibited by hexamethylene amiloride in vitro. Its function is as follows. Enhances virion budding by targeting host CD4 and Tetherin/BST2 to proteasome degradation. Degradation of CD4 prevents any unwanted premature interactions between viral Env and its host receptor CD4 in the endoplasmic reticulum. Degradation of antiretroviral protein Tetherin/BST2 is important for virion budding, as BST2 tethers new viral particles to the host cell membrane. Mechanistically, Vpu bridges either CD4 or BST2 to BTRC, a substrate recognition subunit of the Skp1/Cullin/F-box protein E3 ubiquitin ligase, induces their ubiquitination and subsequent proteasomal degradation. The alteration of the E3 ligase specificity by Vpu seems to promote the degradation of host IKBKB, leading to NF-kappa-B down-regulation and subsequent apoptosis. Acts as a viroporin that forms an oligomeric ion channel in membranes. Modulates the host DNA repair mechanisms to promote degradation of nuclear viral cDNA in cells that are already productively infected in order to suppress immune sensing and proviral hyper-integration (superinfection). Manipulates PML-NBs and modulates SUMOylation of host BLM protein thereby enhancing its DNA-end processing activity toward viral unintegrated linear DNA. Also inhibits RAD52-mediated homologous repair of viral cDNA, preventing the generation of dead-end circular forms of single copies of the long terminal repeat and permitting sustained nucleolytic attack. This Human immunodeficiency virus type 1 group M subtype H (isolate 90CF056) (HIV-1) protein is Protein Vpu.